Reading from the N-terminus, the 129-residue chain is Translation initiation factor 5A (129 aa).

Residue Lys36 is modified to Hypusine.

This sequence belongs to the eIF-5A family.

Its subcellular location is the cytoplasm. Functionally, functions by promoting the formation of the first peptide bond. This is Translation initiation factor 5A from Picrophilus torridus (strain ATCC 700027 / DSM 9790 / JCM 10055 / NBRC 100828 / KAW 2/3).